We begin with the raw amino-acid sequence, 221 residues long: Oxaloacetate tautomerase FAHD1, mitochondrial (221 aa).

A mitochondrion-targeting transit peptide spans 1-24 (MASTKPLSRFWEWGKNIVCVGRNY). Position 37 is a phosphoserine (Ser37). 3 residues coordinate Mg(2+): Glu68, Glu70, and Asp99. Lys110 is modified (N6-acetyllysine). Residue Lys112 is modified to N6-succinyllysine.

It belongs to the FAH family. Homodimer. Mg(2+) serves as cofactor. Mn(2+) is required as a cofactor.

Its subcellular location is the mitochondrion. It is found in the cytoplasm. The protein localises to the cytosol. The catalysed reaction is oxaloacetate = enol-oxaloacetate. It carries out the reaction oxaloacetate + H(+) = pyruvate + CO2. The enzyme catalyses a 3-acylpyruvate + H2O = a carboxylate + pyruvate + H(+). It catalyses the reaction acetylpyruvate + H2O = acetate + pyruvate + H(+). The catalysed reaction is 3-fumarylpyruvate + H2O = fumarate + pyruvate + H(+). Its activity is regulated as follows. Oxaloacetate decarboxylation is competitively inhibited by oxalate. In terms of biological role, tautomerase that converts enol-oxaloacetate, a strong inhibitor of succinate dehydrogenase, to the physiological keto form of oxaloacetate. It is thereby required to maximize aerobic respiration efficiency by preventing succinate dehydrogenase inhibition. Also acts as a weak oxaloacetate decarboxylase (ODx), catalyzing the decarboxylation of oxaloacetate (OAA) to pyruvate and CO(2), and as such is likely a regulatory enzyme in the TCA cycle. Also displays acylpyruvase activity, being able to hydrolyze acetylpyruvate and fumarylpyruvate in vitro. The protein is Oxaloacetate tautomerase FAHD1, mitochondrial of Rattus norvegicus (Rat).